The primary structure comprises 336 residues: Homoserine O-acetyltransferase (336 aa).

In terms of domain architecture, AB hydrolase-1 spans 58 to 321 (AILVLHALTG…PHGHDAFLID (264 aa)). S147 (nucleophile) is an active-site residue. Position 204 (R204) interacts with substrate. Residues D286 and H315 contribute to the active site. D316 contacts substrate.

Belongs to the AB hydrolase superfamily. MetX family. As to quaternary structure, homodimer.

The protein localises to the cytoplasm. It catalyses the reaction L-homoserine + acetyl-CoA = O-acetyl-L-homoserine + CoA. Its pathway is amino-acid biosynthesis; L-methionine biosynthesis via de novo pathway; O-acetyl-L-homoserine from L-homoserine: step 1/1. Functionally, transfers an acetyl group from acetyl-CoA to L-homoserine, forming acetyl-L-homoserine. The sequence is that of Homoserine O-acetyltransferase from Deinococcus geothermalis (strain DSM 11300 / CIP 105573 / AG-3a).